A 475-amino-acid polypeptide reads, in one-letter code: MSKSEFQVIIVGGSIGGLTLAHCLRRAGIDHIILEKSSSPAPQIGASIGILPNGARILDQLQLWSEVEDYIEPLSTATIGLPDGFSFSSSYPQIINERFGFPIAFLDRQLLLEILYQRYPDRSKIRLEEKVTAVETSDSGATVTTSNGSVYRGGLVVGADGVHSIVRREIWRASKKLSSGLTAEFRCIFGISSAIKGLNVGEQVNALFDGLTIVTIHGKNGRVYWFVIQKLDKKYIYPNCPRYTKHDTTVAAEQLRNIQFYRDITFGQVWENRETASMTVLEENTFKTWHYGRLVLLGDSVHKMTPNIGQGANMAIEDAAALTNLLHNLQKISGTLSSTAAQIETILRQYRRIRYERVESIYRDSRFLVRFQARDGLLNILLSRYYAPYAGDLPADMASKTIADGVMCDFLPPPKRSGDGWKRYRRDGQLRGWRFHAMLCILMLAILYTWVGRTNLDSIVFSACGSLFQKLSVPT.

A helical transmembrane segment spans residues 8 to 24; sequence VIIVGGSIGGLTLAHCL. The FAD site is built by Glu35, Gly49, and Arg108. Asn147 carries N-linked (GlcNAc...) asparagine glycosylation. 2 residues coordinate FAD: Asp299 and Ala312. A helical membrane pass occupies residues 432–451; that stretch reads GWRFHAMLCILMLAILYTWV.

Belongs to the paxM FAD-dependent monooxygenase family. The cofactor is FAD.

It is found in the membrane. It participates in secondary metabolite biosynthesis. FAD-dependent monooxygenase; part of the gene cluster that mediates the biosynthesis of the indole diterpenes janthitremanes such as shearinine K or shearinine A. The geranylgeranyl diphosphate (GGPP) synthase janG catalyzes the first step in janthitremane biosynthesis via conversion of farnesyl pyrophosphate and isopentyl pyrophosphate into geranylgeranyl pyrophosphate (GGPP). Condensation of indole-3-glycerol phosphate with GGPP by the prenyl transferase janC then forms 3-geranylgeranylindole (3-GGI). Epoxidation by the FAD-dependent monooxygenase janM leads to a epoxidized-GGI that is substrate of the terpene cyclase janB for cyclization to yield paspaline. Paspaline is subsequently converted to 13-desoxypaspaline by the cytochrome P450 monooxygenase janP, via beta-PC-M6 in a series of alpha-face oxidations. The cytochrome P450 monooxygenase janQ is proposed to carry out sequential beta-face oxidation steps at C-7 and C-13 of 13-desoxypaspaline to form paspalicine and paspalinine respectively. The indole diterpene prenyltransferase janD may then convert paspalinine into shearinine K which is substrate of janO and/or additional enzymes for oxidation and cyclization to generate shearinine A. The chain is FAD-dependent monooxygenase janM from Penicillium janthinellum (Penicillium vitale).